Reading from the N-terminus, the 218-residue chain is Protein GrpE (218 aa).

Residues 1–75 form a disordered region; that stretch reads MTTPNGMPDN…DVDPDLDGDG (75 aa). Basic and acidic residues predominate over residues 23–40; the sequence is SADRAEQAAEEAAARQAE. Positions 48 to 75 are enriched in acidic residues; sequence SEEEISPELEAEINDLLSDVDPDLDGDG.

The protein belongs to the GrpE family. As to quaternary structure, homodimer.

The protein resides in the cytoplasm. Participates actively in the response to hyperosmotic and heat shock by preventing the aggregation of stress-denatured proteins, in association with DnaK and GrpE. It is the nucleotide exchange factor for DnaK and may function as a thermosensor. Unfolded proteins bind initially to DnaJ; upon interaction with the DnaJ-bound protein, DnaK hydrolyzes its bound ATP, resulting in the formation of a stable complex. GrpE releases ADP from DnaK; ATP binding to DnaK triggers the release of the substrate protein, thus completing the reaction cycle. Several rounds of ATP-dependent interactions between DnaJ, DnaK and GrpE are required for fully efficient folding. This Corynebacterium glutamicum (strain ATCC 13032 / DSM 20300 / JCM 1318 / BCRC 11384 / CCUG 27702 / LMG 3730 / NBRC 12168 / NCIMB 10025 / NRRL B-2784 / 534) protein is Protein GrpE.